We begin with the raw amino-acid sequence, 179 residues long: UPF0227 protein SO_2251 (179 aa).

Belongs to the UPF0227 family.

This chain is UPF0227 protein SO_2251, found in Shewanella oneidensis (strain ATCC 700550 / JCM 31522 / CIP 106686 / LMG 19005 / NCIMB 14063 / MR-1).